The following is a 436-amino-acid chain: Aminotransferase tdiD (436 aa).

4 residues coordinate substrate: arginine 30, tyrosine 86, tyrosine 148, and asparagine 202. N6-(pyridoxal phosphate)lysine is present on lysine 270. Position 407 (arginine 407) interacts with substrate.

It belongs to the class-I pyridoxal-phosphate-dependent aminotransferase family. It depends on pyridoxal 5'-phosphate as a cofactor.

The catalysed reaction is 3-phenylpyruvate + L-tryptophan = indole-3-pyruvate + L-phenylalanine. It functions in the pathway secondary metabolite biosynthesis. Functionally, aminotransferase; part of the gene cluster that mediates the biosynthesis of terrequinone A, an antitumor agent. The first step in the biosynthetic pathway for terrequinone A is formation of indole pyruvic acid (IPA) from L-tryptophan by the aminotransferase tdiD. The nonribosomal peptide synthase tdiA then immediately converts unstable IPA to didemethylasterriquinone D (DDAQ D), via condensation of 2 IPA molecules. The symmetric connectivity of the 2 IPA molecules is thought to arise by head-to-tail dual Claisen condensations facilitated by the TE domain. TdiB then catalyzes reverse prenylation by transferring dimethylallyl diphosphate to carbon atom 2' of DDAQ D, to yield asterriquinone C-1. Finally, tdiC and tdiE enzymes robustly convert asterriquinone C-1 to terrequinone A via a transformation involving regular prenylation at carbon atom 5, which requires elimination of the hydroxy group on C-5. This is Aminotransferase tdiD from Emericella nidulans (strain FGSC A4 / ATCC 38163 / CBS 112.46 / NRRL 194 / M139) (Aspergillus nidulans).